We begin with the raw amino-acid sequence, 195 residues long: Rac-like GTP-binding protein ARAC4 (195 aa).

GTP-binding positions include 12–19, 30–37, 59–63, and 117–120; these read GDGAVGKT, FPTDYVPT, DTAGQ, and TKLD. The short motif at 34-42 is the Effector region element; it reads YVPTVFDNF. Cysteine 192 carries the post-translational modification Cysteine methyl ester. Cysteine 192 is lipidated: S-geranylgeranyl cysteine. The propeptide at 193-195 is removed in mature form; it reads AFL.

Belongs to the small GTPase superfamily. Rho family. As to quaternary structure, interacts with SPK1, ICR1, ICR5 and PIR. As to expression, ubiquitous.

The protein resides in the cytoplasm. It localises to the cell membrane. Functionally, inactive GDP-bound Rho GTPases reside in the cytosol, are found in a complex with Rho GDP-dissociation inhibitors (Rho GDIs), and are released from the GDI protein in order to translocate to membranes upon activation. Involved in cell polarity control during the actin-dependent tip growth of root hairs, thus regulating root hair length and root hair initiation. Contributes, in a SPK1-dependent manner, to the prevention of cortical microtubules organization into parallel arrays oriented perpendicular to the axis of cell elongation to limit anisotropic cell growth during petal development. May regulate a WAVE complex that activates the Arp2/3 complex. The polypeptide is Rac-like GTP-binding protein ARAC4 (Arabidopsis thaliana (Mouse-ear cress)).